We begin with the raw amino-acid sequence, 169 residues long: MSTAQVPYLNCIRNTLTASMCLQNFGSQIVERHNKPEVEVKTSKELVLNPVIIARNKNERVLIETSINSIRISVSIKKSDEVDVILAKKFVRFLQQRAENFIILRRKPVEGYDISFLVTNFHTENMFKHKLVDFIIQFMEDIDREISDLKLTLNARGRIVASEYLKNFA.

Belongs to the ARPC4 family. Component of the Arp2/3 complex composed of arpB/Arp2, arpC/Arp3, arcA/p41-arc, arcB/p34-arc, arcC/p21-arc, arcD/p20-arc and arcE/p16-arc. Interacts with carmil (via the region between the LRR domain and COOH-terminal proline-rich domain); carmil is required for Arp2/3-dependent actin nucleation. Arp2/3 complex, MyoB, MyoC, and the alpha and beta subunits of capping protein all form a larger complex with carmil.

Its subcellular location is the cytoplasm. It localises to the cytoskeleton. The protein resides in the cytosol. The protein localises to the cell cortex. It is found in the cell projection. Its subcellular location is the pseudopodium. Functions as a component of the Arp2/3 complex which is involved in regulation of actin polymerization and together with an activating nucleation-promoting factor (NPF) mediates the formation of branched actin networks. Seems to contact the pointed end of the daughter actin filament. The Arp2/3 complex is involved in organizing the actin system in cell motility and chemotaxis, in phagocytosis and macropinocytosis, at late steps of endosome processing, and in mitosis. In concert with a group of other proteins, the Arp2/3 complex plays a general role in the rapid activation and adaptation of the actin system to its multiple functions. This chain is Actin-related protein 2/3 complex subunit 4 (arcD), found in Dictyostelium discoideum (Social amoeba).